A 779-amino-acid chain; its full sequence is MERTNTTTFKFFSLGGSNEVGRSCHILQYKGKTVMLDAGIHPAYQGLASLPFYDEFDLSKVDILLISHFHLDHAASLPYVMQRTNFQGRVFMTHPTKAIYRWLLRDFVRVTSIGSSSSSMGTKDEGLFSDEDLVDSFDKIETVDYHSTVDVNGIKFTAFHAGHVLGAAMFQIEIAGLRVLFTGDYSREVDRHLNSAEVPPLSSNVLIVESTFGTATHEPRLNRERKLTQLIHSTVMRGGRVLLPVFALGRAQEIMLILDEYWSQHADELGGGQVPIFYASNLAKKCMSVFQTYVNMMNDDIRKKFRDSQTNPFIFKNISYLRNLEDFQDFGPSVMLASPGMLQSGLSRDLLERWCPEDKNLVLITGYSIEGTMAKFIMLEPDTIPSINNPEITIPRRCQVEEISFAAHVDFQENLEFIEKISAPNIILVHGEANPMGRLKSALLSNFASLKGTDNEVHVFNPRNCVEVDLEFQGVKVAKAVGNIVNEIYKEENVEIKEEIAAKIEPIKEENEDNLDSQAEKGLVDEEEHKDIVVSGILVSDDKNFELDFLSLSDLREHHPDLSTTILRERQSVRVNCKKELIYWHILQMFGEAEVLQDDDRVTNQEPKVKEESKDNLTNTGKLILQIMGDIKLTIVNTLAVVEWTQDLMNDTVADSIIAILMNVDSAPASVKLSSHSCDDHDHNNVQSNAQGKIDEVERVKQISRLFKEQFGDCFTLFLNKDEYASNKEETITGVVTIGKSTAKIDFNNMKILECNSNPLKGRVESLLNIGGNLVTPLC.

Zn(2+) is bound by residues His-68, His-70, Asp-72, His-73, His-163, and Asp-184. His-408 acts as the Proton donor in catalysis. His-430 lines the Zn(2+) pocket. Ser-517 carries the post-translational modification Phosphoserine; by ATM or ATR.

This sequence belongs to the metallo-beta-lactamase superfamily. RNA-metabolizing metallo-beta-lactamase-like family. CPSF2/YSH1 subfamily. As to quaternary structure, component of the cleavage and polyadenylation factor (CPF) complex, which is composed of at least PTI1, SYC1, SSU72, GLC7, MPE1, REF2, PFS2, PTA1, YSH1/BRR5, SWD2, CFT2/YDH1, YTH1, CFT1/YHH1, FIP1 and PAP1. Interacts with FIP1, PFS2, RNA14 and YTH1. Zn(2+) serves as cofactor.

The protein localises to the nucleus. In terms of biological role, component of the cleavage and polyadenylation factor (CPF) complex, which plays a key role in polyadenylation-dependent pre-mRNA 3'-end formation and cooperates with cleavage factors including the CFIA complex and NAB4/CFIB. Has endonuclease activity. This chain is Endoribonuclease YSH1 (YSH1), found in Saccharomyces cerevisiae (strain ATCC 204508 / S288c) (Baker's yeast).